Here is a 237-residue protein sequence, read N- to C-terminus: Glutathione S-transferase L1 (237 aa).

The region spanning Gly-29–Ser-110 is the GST N-terminal domain. Glutathione-binding positions include Cys-39–Pro-40, Asn-67–Arg-68, Lys-81–Val-82, and Glu-94–Ser-95. The GST C-terminal domain occupies Tyr-112–Tyr-232.

This sequence belongs to the GST superfamily. Lambda family.

It is found in the cytoplasm. It localises to the cytosol. The catalysed reaction is RX + glutathione = an S-substituted glutathione + a halide anion + H(+). In terms of biological role, catalyzes the glutathione-dependent reduction of S-glutathionylquercetin to quercetin. In vitro, possesses glutathione-dependent thiol transferase activity toward 2-hydroxyethyl disulfide (HED). This is Glutathione S-transferase L1 (GSTL1) from Arabidopsis thaliana (Mouse-ear cress).